The sequence spans 335 residues: UPF0324 membrane protein LMOf2365_2179 (335 aa).

8 helical membrane-spanning segments follow: residues 10–28, 33–55, 91–113, 123–142, 155–177, 251–270, 277–299, and 309–331; these read TFWY…SYFL, FLMI…ALFP, AGWR…VYFL, LAIL…VVAI, VAAT…IYPI, VPWF…FGII, FLVI…NVHL, and PFAA…VLLF.

This sequence belongs to the UPF0324 family.

Its subcellular location is the cell membrane. This Listeria monocytogenes serotype 4b (strain F2365) protein is UPF0324 membrane protein LMOf2365_2179.